A 252-amino-acid polypeptide reads, in one-letter code: Protein lin-28 homolog B (252 aa).

The disordered stretch occupies residues Met-1 to Val-30. A compositionally biased stretch (basic and acidic residues) spans Gly-9 to Glu-19. A CSD domain is found at Leu-32 to Pro-105. CCHC-type zinc fingers lie at residues Asp-130–Leu-147 and Lys-152–His-169. The Zn(2+) site is built by Cys-132, Cys-135, His-140, Cys-145, Cys-154, Cys-157, His-162, and Cys-167. The tract at residues Val-172 to Lys-252 is disordered. Residues Gly-213–Ser-222 are compositionally biased toward basic and acidic residues. The segment covering Pro-225–Glu-238 has biased composition (polar residues).

It belongs to the lin-28 family.

Its subcellular location is the nucleus. The protein localises to the nucleolus. Suppressor of specific microRNA (miRNA) biogenesis. Binds target primary miRNA transcripts and sequester them in the nucleolus, away from the microprocessor complex, hence preventing their processing into mature miRNA. The specific interaction with target pri-miRNAs occurs via an 5'-GGAG-3' motif in the pre-miRNA terminal loop. This chain is Protein lin-28 homolog B (lin28b), found in Xenopus laevis (African clawed frog).